Here is a 245-residue protein sequence, read N- to C-terminus: 1-(5-phosphoribosyl)-5-[(5-phosphoribosylamino)methylideneamino] imidazole-4-carboxamide isomerase (245 aa).

The active-site Proton acceptor is Asp7. The active-site Proton donor is Asp129.

The protein belongs to the HisA/HisF family.

Its subcellular location is the cytoplasm. It carries out the reaction 1-(5-phospho-beta-D-ribosyl)-5-[(5-phospho-beta-D-ribosylamino)methylideneamino]imidazole-4-carboxamide = 5-[(5-phospho-1-deoxy-D-ribulos-1-ylimino)methylamino]-1-(5-phospho-beta-D-ribosyl)imidazole-4-carboxamide. The protein operates within amino-acid biosynthesis; L-histidine biosynthesis; L-histidine from 5-phospho-alpha-D-ribose 1-diphosphate: step 4/9. In Idiomarina loihiensis (strain ATCC BAA-735 / DSM 15497 / L2-TR), this protein is 1-(5-phosphoribosyl)-5-[(5-phosphoribosylamino)methylideneamino] imidazole-4-carboxamide isomerase.